We begin with the raw amino-acid sequence, 822 residues long: Nuclear factor of activated T-cells, cytoplasmic 1 (822 aa).

Positions 110–115 (PRIEIT) are calcineurin-binding. The segment at 118-210 (LGLHHNNGQF…CVSPKTTDPE (93 aa)) is transactivation domain A (TAD-A). Residues 192-206 (PQTSPWQSPCVSPKT) show a composition bias toward polar residues. The disordered stretch occupies residues 192-289 (PQTSPWQSPC…HSSPRVSVTD (98 aa)). 2 consecutive repeat copies span residues 195–211 (SPWQ…DPEE) and 225–241 (SPRH…VTEE). The tract at residues 195-290 (SPWQSPCVSP…SSPRVSVTDD (96 aa)) is 3 X SP repeats. Residues Ser225 and Ser229 each carry the phosphoserine modification. The span at 225-242 (SPRHSPSTSPRTSVTEES) shows a compositional bias: low complexity. Ser237 bears the Phosphoserine; by PKA mark. Residues 257–259 (KRK) carry the Nuclear localization signal motif. Copy 3 of the repeat occupies 274 to 290 (SPTPSPHSSPRVSVTDD). Ser286 bears the Phosphoserine; by PKA mark. Positions 302–313 (SAIVAAINALST) match the Nuclear export signal motif. One can recognise an RHD domain in the interval 400–582 (PSLPALDWQL…NPIECSQRSA (183 aa)). The DNA-binding element occupies 429–436 (RAHYETEG). A Nuclear localization signal motif is present at residues 672-674 (KRK). The disordered stretch occupies residues 772–822 (GPGHLGLQRPAGGVLGGQEAPRPGGPHPGAPQLHPLNLSQSIVTRLTEPQP). Residues 808–822 (NLSQSIVTRLTEPQP) show a composition bias toward polar residues.

In terms of assembly, member of the multicomponent NFATC transcription complex that consists of at least two components, a pre-existing cytoplasmic component NFATC2 and an inducible nuclear component NFATC1. Other members such as NFATC4, NFATC3 or members of the activating protein-1 family, MAF, GATA4 and Cbp/p300 can also bind the complex. NFATC proteins bind to DNA as monomers. Interacts with HOMER2 and HOMER3; this interaction may compete with calcineurin/PPP3CA-binding and hence prevent NFATC1 dephosphorylation and activation. Interacts with TLE6/GRG6. Phosphorylated by NFATC-kinase and GSK3B; phosphorylation induces NFATC1 nuclear exit and dephosphorylation by calcineurin promotes nuclear import. Phosphorylation by PKA and DYRK2 negatively modulates nuclear accumulation, and promotes subsequent phosphorylation by GSK3B or casein kinase 1.

Its subcellular location is the cytoplasm. The protein resides in the nucleus. Its function is as follows. Plays a role in the inducible expression of cytokine genes in T-cells, especially in the induction of the IL-2 or IL-4 gene transcription. Also controls gene expression in embryonic cardiac cells. Could regulate not only the activation and proliferation but also the differentiation and programmed death of T-lymphocytes as well as lymphoid and non-lymphoid cells. Required for osteoclastogenesis and regulates many genes important for osteoclast differentiation and function. In Sus scrofa (Pig), this protein is Nuclear factor of activated T-cells, cytoplasmic 1 (NFATC1).